The primary structure comprises 260 residues: Segregation and condensation protein A (260 aa).

The protein belongs to the ScpA family. Component of a cohesin-like complex composed of ScpA, ScpB and the Smc homodimer, in which ScpA and ScpB bind to the head domain of Smc. The presence of the three proteins is required for the association of the complex with DNA.

It localises to the cytoplasm. Participates in chromosomal partition during cell division. May act via the formation of a condensin-like complex containing Smc and ScpB that pull DNA away from mid-cell into both cell halves. The chain is Segregation and condensation protein A from Halalkalibacterium halodurans (strain ATCC BAA-125 / DSM 18197 / FERM 7344 / JCM 9153 / C-125) (Bacillus halodurans).